The chain runs to 387 residues: Probable aminomethyltransferase, mitochondrial (387 aa).

Positions 219, 248, and 385 each coordinate substrate.

It belongs to the GcvT family. In terms of assembly, the glycine cleavage system is composed of four proteins: P, T, L and H.

It is found in the mitochondrion. The enzyme catalyses N(6)-[(R)-S(8)-aminomethyldihydrolipoyl]-L-lysyl-[protein] + (6S)-5,6,7,8-tetrahydrofolate = N(6)-[(R)-dihydrolipoyl]-L-lysyl-[protein] + (6R)-5,10-methylene-5,6,7,8-tetrahydrofolate + NH4(+). Functionally, the glycine cleavage system catalyzes the degradation of glycine. This Schizosaccharomyces pombe (strain 972 / ATCC 24843) (Fission yeast) protein is Probable aminomethyltransferase, mitochondrial (gcv1).